The following is a 675-amino-acid chain: Protein PALS1 (675 aa).

Disordered regions lie at residues 1–34 and 51–78; these read MTTS…KHRE and RRSA…KKQE. Residues 1–345 form a required for the correct localization of PALS1 and PATJ at cell-cell contacts and the normal formation of tight junctions and adherens junctions region; sequence MTTSHMNGHV…QQIKPPPAKE (345 aa). 2 stretches are compositionally biased toward basic and acidic residues: residues 10-34 and 54-78; these read VTEE…KHRE and AQLE…KKQE. Phosphoserine is present on residues serine 14 and serine 25. An interaction with PARD6B region spans residues 21–140; sequence VDLASPEEHQ…LKHIQHTLVD (120 aa). Phosphoserine is present on residues serine 83 and serine 84. L27 domains are found at residues 120 to 177 and 179 to 235; these read KILE…NKAS and PFPL…MQLE. An interaction with LIN7C region spans residues 181–243; it reads PLISNAQDLA…LEPITDERVY (63 aa). The region spanning 256 to 336 is the PDZ domain; it reads IVRIEKARDI…TLTFVLIPSQ (81 aa). In terms of domain architecture, SH3 spans 345 to 417; that stretch reads ETVIHVKAHF…PGKSFQQQRE (73 aa). Positions 479–660 constitute a Guanylate kinase-like domain; that stretch reads KRPIILIGPQ…AYQELLRLIN (182 aa). 486 to 493 is a binding site for ATP; that stretch reads GPQNCGQN.

Belongs to the MAGUK family. In terms of assembly, heterodimer with MPP1. Forms a heterotrimeric complex composed of PALS1, LIN7B and PATJ; the N-terminal L27 domain of PALS1 interacts with the L27 domain of PATJ and the C-terminal L27 domain of PALS1 interacts with the L27 domain of LIN7B. Component of a complex composed of PALS1, CRB1 and MPP4. Component of a complex whose core is composed of ARHGAP17, AMOT, PALS1, PATJ and PARD3/PAR3. Component of a complex composed of PALS1, CRB1 and EPB41L5. Within the complex, interacts (via HOOK domain) with EPB41L5 (via FERM domain), and interacts with CRB1 (via intracellular domain). Component of a complex composed of PALS1, MPP3 and CRB1; PALS1 acts as a bridging protein between MPP3 (via guanylate kinase-like domain) and CRB1. Component of a complex composed of CRB3, PALS1 and PATJ. As part of the Crumbs complex; interacts with WWP1, the interaction is enhanced by AMOTL2 and facilitates WWP1 localization to the plasma membrane. The Crumbs complex promotes monoubiquitination of AMOTL2 by WWP1, which activates the Hippo signaling pathway. Interacts (via PDZ domain) with PATJ (via N-terminus). Interacts with EZR. Interacts (via PDZ domain) with CRB1 (via C-terminal ERLI motif). While the PDZ domain is sufficient for interaction with CRB1, the adjacent SH3 and guanylate kinase-like domains are likely to contribute to a high affinity interaction. Interacts with WWTR1/TAZ (via WW domain). Interacts with MPP7. Interacts (via PDZ domain) with CRB3 (via C-terminus). Interacts with LIN7C. Interacts with MPDZ. Interacts with PARD6B. Interacts with SC6A1. Interacts with CDH5; the interaction promotes PALS1 localization to cell junctions and is required for CDH5-mediated vascular lumen formation and endothelial cell. Interacts with NPHP1 (via coiled coil and SH3 domains). Interacts with NPHP4. Interacts with CRB2. As to quaternary structure, (Microbial infection) Interacts (via PDZ domain) with human coronaviruses SARS-CoV and, probably, SARS-CoV-2 envelope small membrane protein E (via C-terminus); this inhibits the interaction between PALS1 and CRB3. As to expression, expressed at the outer limiting membrane in the retina (at protein level). Expressed in T lymphocytes (at protein level). Expressed in the kidney (at protein level).

The protein localises to the golgi apparatus. It localises to the cell membrane. It is found in the endomembrane system. Its subcellular location is the cell junction. The protein resides in the tight junction. The protein localises to the adherens junction. It localises to the cell projection. It is found in the axon. Its subcellular location is the perikaryon. The protein resides in the apical cell membrane. The protein localises to the endoplasmic reticulum-Golgi intermediate compartment. In terms of biological role, plays a role in tight junction biogenesis and in the establishment of cell polarity in epithelial cells. Also involved in adherens junction biogenesis by ensuring correct localization of the exocyst complex protein EXOC4/SEC8 which allows trafficking of adherens junction structural component CDH1 to the cell surface. Plays a role through its interaction with CDH5 in vascular lumen formation and endothelial membrane polarity. Required during embryonic and postnatal retinal development. Required for the maintenance of cerebellar progenitor cells in an undifferentiated proliferative state, preventing premature differentiation, and is required for cerebellar histogenesis, fissure formation, cerebellar layer organization and cortical development. Plays a role in neuronal progenitor cell survival, potentially via promotion of mTOR signaling. Plays a role in the radial and longitudinal extension of the myelin sheath in Schwann cells. May modulate SC6A1/GAT1-mediated GABA uptake by stabilizing the transporter. Plays a role in the T-cell receptor-mediated activation of NF-kappa-B. Required for localization of EZR to the apical membrane of parietal cells and may play a role in the dynamic remodeling of the apical cytoskeleton. Required for the normal polarized localization of the vesicular marker STX4. Required for the correct trafficking of the myelin proteins PMP22 and MAG. Involved in promoting phosphorylation and cytoplasmic retention of transcriptional coactivators YAP1 and WWTR1/TAZ which leads to suppression of TGFB1-dependent transcription of target genes such as CCN2/CTGF, SERPINE1/PAI1, SNAI1/SNAIL1 and SMAD7. (Microbial infection) Acts as an interaction partner for human coronaviruses SARS-CoV and, probably, SARS-CoV-2 envelope protein E which results in delayed formation of tight junctions and disregulation of cell polarity. The chain is Protein PALS1 from Homo sapiens (Human).